The sequence spans 110 residues: uncharacterized protein (110 aa).

A run of 3 helical transmembrane segments spans residues 5-25 (ILAI…PIHL), 62-82 (FPII…AIVS), and 90-110 (GISI…LISI).

The protein to A.fulgidus AF1754.

The protein localises to the cell membrane. This is an uncharacterized protein from Methanocaldococcus jannaschii (strain ATCC 43067 / DSM 2661 / JAL-1 / JCM 10045 / NBRC 100440) (Methanococcus jannaschii).